The sequence spans 244 residues: Type III pantothenate kinase (244 aa).

7 to 14 contacts ATP; that stretch reads DIGNTRLK. Substrate-binding positions include Tyr95 and 102-105; that span reads GIDR. Catalysis depends on Asp104, which acts as the Proton acceptor. Thr126 lines the ATP pocket. Substrate is bound at residue Thr177.

Belongs to the type III pantothenate kinase family. As to quaternary structure, homodimer. The cofactor is NH4(+). K(+) is required as a cofactor.

Its subcellular location is the cytoplasm. The catalysed reaction is (R)-pantothenate + ATP = (R)-4'-phosphopantothenate + ADP + H(+). It functions in the pathway cofactor biosynthesis; coenzyme A biosynthesis; CoA from (R)-pantothenate: step 1/5. Catalyzes the phosphorylation of pantothenate (Pan), the first step in CoA biosynthesis. This Acinetobacter baumannii (strain ACICU) protein is Type III pantothenate kinase.